We begin with the raw amino-acid sequence, 508 residues long: Hydroxymethylglutaryl-CoA synthase, mitochondrial (508 aa).

The transit peptide at 1-37 (MQRLLTPVKRILQLTRAVQETSLTPARLLPVAHQRFS) directs the protein to the mitochondrion. Lysine 52 bears the N6-succinyllysine mark. (3S)-3-hydroxy-3-methylglutaryl-CoA-binding residues include glutamate 80 and alanine 81. N6-acetyllysine; alternate is present on lysine 83. Residue lysine 83 is modified to N6-succinyllysine; alternate. Glutamate 132 functions as the Proton donor/acceptor in the catalytic mechanism. Residues cysteine 166, asparagine 204, and threonine 208 each contribute to the (3S)-3-hydroxy-3-methylglutaryl-CoA site. Cysteine 166 functions as the Acyl-thioester intermediate in the catalytic mechanism. Lysine 221 bears the N6-succinyllysine mark. Lysine 243 carries the post-translational modification N6-acetyllysine. Position 256 is an N6-acetyllysine; alternate (lysine 256). Position 256 is an N6-succinyllysine; alternate (lysine 256). Residues serine 258 and histidine 301 each coordinate (3S)-3-hydroxy-3-methylglutaryl-CoA. Histidine 301 acts as the Proton donor/acceptor in catalysis. Lysine 306 carries the N6-acetyllysine modification. Residue lysine 310 coordinates (3S)-3-hydroxy-3-methylglutaryl-CoA. Lysine 310 bears the N6-acetyllysine; alternate mark. Lysine 310 bears the N6-succinyllysine; alternate mark. An N6-succinyllysine modification is found at lysine 333. N6-acetyllysine; alternate occurs at positions 342, 350, 354, and 358. An N6-succinyllysine; alternate mark is found at lysine 342, lysine 350, lysine 354, and lysine 358. (3S)-3-hydroxy-3-methylglutaryl-CoA is bound by residues asparagine 380 and serine 414. Phosphoserine is present on serine 433. Lysine 437 is subject to N6-acetyllysine. Position 440 is a phosphoserine (serine 440). Residue lysine 447 is modified to N6-acetyllysine; alternate. Position 447 is an N6-succinyllysine; alternate (lysine 447). Serine 456 is subject to Phosphoserine. The residue at position 473 (lysine 473) is an N6-acetyllysine; alternate. Lysine 473 carries the N6-succinyllysine; alternate modification. A Phosphoserine modification is found at serine 477.

The protein belongs to the thiolase-like superfamily. HMG-CoA synthase family. Homodimer. Succinylated. Desuccinylated by SIRT5. Succinylation, at least at Lys-83 and Lys-310, inhibits the enzymatic activity. In terms of tissue distribution, expression in liver is 200-fold higher than in any other tissue. Low expression in colon, kidney, testis, and pancreas. Very low expression in heart and skeletal muscle. Not detected in brain. As to expression, highest expression detected in heart and skeletal muscle.

Its subcellular location is the mitochondrion. The catalysed reaction is acetoacetyl-CoA + acetyl-CoA + H2O = (3S)-3-hydroxy-3-methylglutaryl-CoA + CoA + H(+). It participates in metabolic intermediate biosynthesis; (R)-mevalonate biosynthesis; (R)-mevalonate from acetyl-CoA: step 2/3. Catalyzes the first irreversible step in ketogenesis, condensing acetyl-CoA to acetoacetyl-CoA to form HMG-CoA, which is converted by HMG-CoA reductase (HMGCR) into mevalonate. In Homo sapiens (Human), this protein is Hydroxymethylglutaryl-CoA synthase, mitochondrial (HMGCS2).